The sequence spans 301 residues: Homoserine O-acetyltransferase (301 aa).

The active-site Acyl-thioester intermediate is the C142. The substrate site is built by K163 and S192. Residue H235 is the Proton acceptor of the active site. Residue E237 is part of the active site. Substrate is bound at residue R249.

This sequence belongs to the MetA family.

The protein localises to the cytoplasm. It catalyses the reaction L-homoserine + acetyl-CoA = O-acetyl-L-homoserine + CoA. It functions in the pathway amino-acid biosynthesis; L-methionine biosynthesis via de novo pathway; O-acetyl-L-homoserine from L-homoserine: step 1/1. Its function is as follows. Transfers an acetyl group from acetyl-CoA to L-homoserine, forming acetyl-L-homoserine. The sequence is that of Homoserine O-acetyltransferase from Bacillus mycoides (strain KBAB4) (Bacillus weihenstephanensis).